A 458-amino-acid polypeptide reads, in one-letter code: uncharacterized protein (458 aa).

This is an uncharacterized protein from Bacillus subtilis (strain 168).